We begin with the raw amino-acid sequence, 293 residues long: Haloalkane dehalogenase (293 aa).

Residues 34–158 (PVLFLHGNPT…FQAFRTADVG (125 aa)) enclose the AB hydrolase-1 domain. Asp-106 acts as the Nucleophile in catalysis. The Proton donor role is filled by Glu-130. His-272 acts as the Proton acceptor in catalysis.

It belongs to the haloalkane dehalogenase family. Type 2 subfamily. In terms of assembly, monomer.

The enzyme catalyses 1-haloalkane + H2O = a halide anion + a primary alcohol + H(+). It participates in xenobiotic degradation; haloalkane degradation. It functions in the pathway xenobiotic degradation; 1,3-dichloropropene degradation. Its function is as follows. Catalyzes hydrolytic cleavage of carbon-halogen bonds in halogenated aliphatic compounds, leading to the formation of the corresponding primary alcohols, halide ions and protons. Has a broad substrate specificity, as it is able to dehalogenate mono- and di- chlorinated and brominated alkanes (up to at least C10), and the two isomers of 1,3-dichloropropene to 3-chloroallyl alcohol; the highest activity was found with 1,2-dibromoethane, while no activity was observed with the analog 1,2-dichloroethane. The polypeptide is Haloalkane dehalogenase (dhaA) (Pseudomonas pavonaceae).